The sequence spans 318 residues: 1-phosphofructokinase (318 aa).

Residues 228-233 (SMGTEG) and 259-260 (GD) contribute to the ATP site. Aspartate 260 (proton acceptor) is an active-site residue.

Belongs to the carbohydrate kinase PfkB family.

It carries out the reaction beta-D-fructose 1-phosphate + ATP = beta-D-fructose 1,6-bisphosphate + ADP + H(+). Its function is as follows. Catalyzes the ATP-dependent phosphorylation of fructose-l-phosphate to fructose-l,6-bisphosphate. The chain is 1-phosphofructokinase from Xanthomonas campestris pv. campestris (strain ATCC 33913 / DSM 3586 / NCPPB 528 / LMG 568 / P 25).